The sequence spans 184 residues: Nucleoside triphosphate pyrophosphatase (184 aa).

D71 (proton acceptor) is an active-site residue.

The protein belongs to the Maf family. The cofactor is a divalent metal cation.

It is found in the cytoplasm. The catalysed reaction is a ribonucleoside 5'-triphosphate + H2O = a ribonucleoside 5'-phosphate + diphosphate + H(+). It catalyses the reaction a 2'-deoxyribonucleoside 5'-triphosphate + H2O = a 2'-deoxyribonucleoside 5'-phosphate + diphosphate + H(+). In terms of biological role, nucleoside triphosphate pyrophosphatase. May have a dual role in cell division arrest and in preventing the incorporation of modified nucleotides into cellular nucleic acids. The polypeptide is Nucleoside triphosphate pyrophosphatase (Synechococcus sp. (strain CC9605)).